A 159-amino-acid polypeptide reads, in one-letter code: SsrA-binding protein (159 aa).

The tract at residues 134–159 (KLHDKRETSKERDWNRQKNRLLKERG) is disordered. Positions 137 to 159 (DKRETSKERDWNRQKNRLLKERG) are enriched in basic and acidic residues.

Belongs to the SmpB family.

It is found in the cytoplasm. Its function is as follows. Required for rescue of stalled ribosomes mediated by trans-translation. Binds to transfer-messenger RNA (tmRNA), required for stable association of tmRNA with ribosomes. tmRNA and SmpB together mimic tRNA shape, replacing the anticodon stem-loop with SmpB. tmRNA is encoded by the ssrA gene; the 2 termini fold to resemble tRNA(Ala) and it encodes a 'tag peptide', a short internal open reading frame. During trans-translation Ala-aminoacylated tmRNA acts like a tRNA, entering the A-site of stalled ribosomes, displacing the stalled mRNA. The ribosome then switches to translate the ORF on the tmRNA; the nascent peptide is terminated with the 'tag peptide' encoded by the tmRNA and targeted for degradation. The ribosome is freed to recommence translation, which seems to be the essential function of trans-translation. The polypeptide is SsrA-binding protein (Sinorhizobium fredii (strain NBRC 101917 / NGR234)).